A 320-amino-acid polypeptide reads, in one-letter code: Taste receptor type 2 member 109 (320 aa).

At 1 to 14 the chain is on the extracellular side; that stretch reads MEHFLKSIFDISKN. A helical membrane pass occupies residues 15-35; the sequence is VLPIILFIELIIGIIGNGFMA. Residues 36 to 62 are Cytoplasmic-facing; sequence LVHCMDWVKRKKMSLVNQILTTLATSR. The chain crosses the membrane as a helical span at residues 63 to 83; that stretch reads ICLLWFMLLGLLITLLDPDLA. Topologically, residues 84–94 are extracellular; sequence SARMMIQVASN. A helical transmembrane segment spans residues 95 to 115; the sequence is LWIIANHMSIWLATCLTVFYF. Topologically, residues 116 to 135 are cytoplasmic; sequence LKIANFSSSLFLYLKWRVEK. Residues 136 to 156 traverse the membrane as a helical segment; that stretch reads VISVIFLVSLVLLFLNMLLMN. Residues 157 to 191 lie on the Extracellular side of the membrane; it reads LENDMCIAEYHQINISYSFIYHYRADCERRVLRLH. N170 carries an N-linked (GlcNAc...) asparagine glycan. The helical transmembrane segment at 192-212 threads the bilayer; that stretch reads IIILSVPFVLSLPTFLLLIFS. Residues 213 to 240 are Cytoplasmic-facing; sequence LWTHHKKMQQHVQGRRDASTTAHFKALQ. The chain crosses the membrane as a helical span at residues 241 to 261; that stretch reads TVIAFLLLYCIFILSMLLQFW. At 262-270 the chain is on the extracellular side; the sequence is KYELMKKPL. Residues 271–291 form a helical membrane-spanning segment; it reads FILFCHIVYGAFPSFHSYVLI. At 292–320 the chain is on the cytoplasmic side; the sequence is LGDMKLRQASLSVLLWLKCRPNYIETLDL.

Belongs to the G-protein coupled receptor T2R family.

It localises to the membrane. In terms of biological role, putative taste receptor which may play a role in the perception of bitterness. The chain is Taste receptor type 2 member 109 from Rattus norvegicus (Rat).